Here is an 834-residue protein sequence, read N- to C-terminus: Putative COX1/OXI3 intron 1 protein (834 aa).

Positions M162–G188 are disordered. Over residues N167–G181 the composition is skewed to polar residues. One can recognise a Reverse transcriptase domain in the interval L296–I577.

Its subcellular location is the mitochondrion. This chain is Putative COX1/OXI3 intron 1 protein (AI1), found in Saccharomyces cerevisiae (strain ATCC 204508 / S288c) (Baker's yeast).